Here is a 314-residue protein sequence, read N- to C-terminus: Endolytic peptidoglycan transglycosylase RlpA (314 aa).

Positions 1-19 are cleaved as a signal peptide; sequence MGWALKKVCFLGVIFLISA. A lipid anchor (N-palmitoyl cysteine) is attached at C20. Residue C20 is the site of S-diacylglycerol cysteine attachment. In terms of domain architecture, SPOR spans 241–314; it reads SVSGGKFSLQ…YNQNAVLTRE (74 aa).

The protein belongs to the RlpA family.

The protein resides in the cell membrane. Functionally, lytic transglycosylase with a strong preference for naked glycan strands that lack stem peptides. The sequence is that of Endolytic peptidoglycan transglycosylase RlpA from Helicobacter pylori (strain J99 / ATCC 700824) (Campylobacter pylori J99).